Here is a 399-residue protein sequence, read N- to C-terminus: E3 ubiquitin-protein ligase APD4 (399 aa).

2 helical membrane-spanning segments follow: residues 42–62 (FGIIMGLWFFASVCLIFGVYG) and 284–304 (LIAYGSFTGVLLSFMLVAIHF). The segment at 348–387 (CAICFDAPRDCCFLPCGHCVSCYQCGTKIKRTKGRCPICR) adopts an RING-type zinc-finger fold.

As to expression, expressed in the shoot apical meristems (SAM), root tips and inflorescences.

It is found in the endomembrane system. It localises to the vacuole membrane. It carries out the reaction S-ubiquitinyl-[E2 ubiquitin-conjugating enzyme]-L-cysteine + [acceptor protein]-L-lysine = [E2 ubiquitin-conjugating enzyme]-L-cysteine + N(6)-ubiquitinyl-[acceptor protein]-L-lysine.. Its pathway is protein modification; protein ubiquitination. In terms of biological role, involved in pollen mitosis II (PMII) regulation during male gametogenesis. In Arabidopsis thaliana (Mouse-ear cress), this protein is E3 ubiquitin-protein ligase APD4.